Consider the following 455-residue polypeptide: Putative FBD-associated F-box protein At5g56400 (455 aa).

The F-box domain maps to 32–81 (VDKISDLPEDLLVHILSLLPTTNDIVATSGVSKRWESLWTKVHKLRFNDR). The 50-residue stretch at 372–421 (WNQQPSYVPECLTKSLEIFEWRNYKATFRERDVAVYILKNSTCLKKTVIS) folds into the FBD domain.

In Arabidopsis thaliana (Mouse-ear cress), this protein is Putative FBD-associated F-box protein At5g56400.